Here is a 276-residue protein sequence, read N- to C-terminus: MRIVSTVEELRSALPMDQTIGFVPTMGYLHEGHMSLVENARRENDVVVMSIFVNPTQFGPNEDLDRYPRDFERDEKLAREAGVDVLFYPTTETMYPLDMARVTVRHGADVLCGASRPGHFDGVLTIVSKLFNLVQPTRAYFGLKDAQQVALIEGYVRDYFVPVEIRRCPIIREETGLAKSSRNVYLSDIETVEASRIFSALTMAREALDAGQQVDEVKRQLIERLDEIPNSQIDYVELVDYPTLGAVSSDSTELLLAVAIQFERARLIDNVIWKKG.

Residue methionine 26–histidine 33 participates in ATP binding. The active-site Proton donor is histidine 33. Glutamine 57 serves as a coordination point for (R)-pantoate. Glutamine 57 contributes to the beta-alanine binding site. An ATP-binding site is contributed by glycine 142–aspartate 145. Glutamine 148 is a binding site for (R)-pantoate. Residues isoleucine 171 and lysine 179–arginine 182 each bind ATP.

Belongs to the pantothenate synthetase family. In terms of assembly, homodimer.

It localises to the cytoplasm. The enzyme catalyses (R)-pantoate + beta-alanine + ATP = (R)-pantothenate + AMP + diphosphate + H(+). It functions in the pathway cofactor biosynthesis; (R)-pantothenate biosynthesis; (R)-pantothenate from (R)-pantoate and beta-alanine: step 1/1. Its function is as follows. Catalyzes the condensation of pantoate with beta-alanine in an ATP-dependent reaction via a pantoyl-adenylate intermediate. The sequence is that of Pantothenate synthetase from Exiguobacterium sp. (strain ATCC BAA-1283 / AT1b).